The sequence spans 212 residues: ATP phosphoribosyltransferase (212 aa).

The protein belongs to the ATP phosphoribosyltransferase family. Short subfamily. Heteromultimer composed of HisG and HisZ subunits.

Its subcellular location is the cytoplasm. It carries out the reaction 1-(5-phospho-beta-D-ribosyl)-ATP + diphosphate = 5-phospho-alpha-D-ribose 1-diphosphate + ATP. Its pathway is amino-acid biosynthesis; L-histidine biosynthesis; L-histidine from 5-phospho-alpha-D-ribose 1-diphosphate: step 1/9. Its function is as follows. Catalyzes the condensation of ATP and 5-phosphoribose 1-diphosphate to form N'-(5'-phosphoribosyl)-ATP (PR-ATP). Has a crucial role in the pathway because the rate of histidine biosynthesis seems to be controlled primarily by regulation of HisG enzymatic activity. The polypeptide is ATP phosphoribosyltransferase (Clostridium botulinum (strain ATCC 19397 / Type A)).